Here is a 172-residue protein sequence, read N- to C-terminus: Putative phosphoesterase BC_1225 (172 aa).

The Proton donor role is filled by histidine 34. Short sequence motifs (HXTX) lie at residues 34 to 37 (HITL) and 115 to 118 (HLTI). Histidine 115 (proton acceptor) is an active-site residue.

Belongs to the 2H phosphoesterase superfamily. YjcG family.

The chain is Putative phosphoesterase BC_1225 from Bacillus cereus (strain ATCC 14579 / DSM 31 / CCUG 7414 / JCM 2152 / NBRC 15305 / NCIMB 9373 / NCTC 2599 / NRRL B-3711).